Here is a 401-residue protein sequence, read N- to C-terminus: cAMP-dependent protein kinase type II-alpha regulatory subunit (401 aa).

S2 carries the post-translational modification N-acetylserine. The tract at residues 2 to 135 (SHIQIPPGLT…RLQEACKDIL (134 aa)) is dimerization and phosphorylation. The interval 43-65 (ARSRASTPPAAPPSGSQDFDPGA) is disordered. Over residues 46-58 (RASTPPAAPPSGS) the composition is skewed to low complexity. S48, S75, and S77 each carry phosphoserine. S96 carries the phosphoserine; by PKA modification. 3',5'-cyclic AMP is bound by residues 136 to 257 (LFKN…ESVP), E205, R214, 258 to 401 (LLKS…DPGQ), E335, and R344. Position 212 is a phosphothreonine; by PDPK1 (T212). 2 positions are modified to phosphoserine: S347 and S392.

This sequence belongs to the cAMP-dependent kinase regulatory chain family. As to quaternary structure, the inactive form of the enzyme is composed of two regulatory chains and two catalytic chains. Activation by cAMP produces two active catalytic monomers and a regulatory dimer that binds four cAMP molecules. Interacts with AKAP4 and CBFA2T3. Interacts with the phosphorylated form of PJA2. Interacts with MYRIP; this interaction may link PKA to components of the exocytosis machinery, thus facilitating exocytosis, including insulin release. Forms a complex composed of PRKAR2A, GSK3B and GSKIP through GSKIP interaction; facilitates PKA-induced phosphorylation and regulates GSK3B activity. Interacts with ADCY8; inhibits adenylate cyclase activity through PKA phosphorylation. Post-translationally, a second phosphorylation site has not been located. In terms of processing, phosphorylation of Thr-212 by PDPK1 seems to attenuate the activity of PKA, perhaps by strengthening interaction between the regulatory and the catalytic subunits. Four types of regulatory chains are found: I-alpha, I-beta, II-alpha, and II-beta. Their expression varies among tissues and is in some cases constitutive and in others inducible.

It is found in the cytoplasm. Its subcellular location is the cell membrane. Its function is as follows. Regulatory subunit of the cAMP-dependent protein kinases involved in cAMP signaling in cells. Type II regulatory chains mediate membrane association by binding to anchoring proteins, including the MAP2 kinase. This chain is cAMP-dependent protein kinase type II-alpha regulatory subunit (PRKAR2A), found in Bos taurus (Bovine).